The primary structure comprises 242 residues: C-reactive protein 1.1 (242 aa).

The signal sequence occupies residues 1 to 24 (MKTFHGPTCGTAVSLCLLLFLTSA). One can recognise a Pentraxin (PTX) domain in the interval 30-241 (ITSKVKFPPS…GVVLSPNEIC (212 aa)). Phosphocholine-binding residues include Thr60 and Tyr63. Intrachain disulfides connect Cys62-Cys125 and Cys112-Cys144. Residues Asp85 and Asn86 each coordinate Ca(2+). Asn147 carries N-linked (GlcNAc...) asparagine glycosylation. Residues Gln169, Asp170, and Gln180 each contribute to the Ca(2+) site. A disulfide bond links Cys207 and Cys241.

The protein belongs to the pentraxin family. Homopentamer. Pentraxin (or pentaxin) have a discoid arrangement of 5 non-covalently bound subunits. Ca(2+) serves as cofactor.

The protein localises to the secreted. Its function is as follows. Might serve the role of immunoglobulins. This is C-reactive protein 1.1 from Limulus polyphemus (Atlantic horseshoe crab).